We begin with the raw amino-acid sequence, 198 residues long: Small ribosomal subunit protein uS4c (198 aa).

A disordered region spans residues 17-40; the sequence is TLPGLTSKRPKNRKDSMNRSSSRK. The S4 RNA-binding domain maps to 88-154; sequence MRLDKSFSIG…IKKNIDLFQR (67 aa).

It belongs to the universal ribosomal protein uS4 family. Part of the 30S ribosomal subunit. Contacts protein S5. The interaction surface between S4 and S5 is involved in control of translational fidelity.

It localises to the plastid. The protein localises to the chloroplast. In terms of biological role, one of the primary rRNA binding proteins, it binds directly to 16S rRNA where it nucleates assembly of the body of the 30S subunit. Functionally, with S5 and S12 plays an important role in translational accuracy. This chain is Small ribosomal subunit protein uS4c (rps4), found in Pinus thunbergii (Japanese black pine).